A 65-amino-acid chain; its full sequence is MPKMKTNRSAAKRFRVTRKGKIIRNHAYKSHKTRKKRRNVLRALRKKDVVSSADKNRVLRLLGKK.

Belongs to the bacterial ribosomal protein bL35 family.

The chain is Large ribosomal subunit protein bL35 from Thermotoga neapolitana (strain ATCC 49049 / DSM 4359 / NBRC 107923 / NS-E).